A 301-amino-acid chain; its full sequence is MSKHGVEQLPAARALTWPQRLGQYWKLVRGDRPIGSLLLLWPTWWALWLAADGLPPLWTLLVFTAGVWLTRSAGCVINDYADRWLDPHVERTKSRPLATGAVSGREALWVFVVLMLVAFALVLTLNWLTVALSVPGVFLAASYPYLKRHTHLPQVYLGMAFGWGIPMAFAAVQGRVPLLGWLLYAANILWATAYDTWYAMVDRDDDIRMGSKSTAILFGRFDLIAQGILYALMAATLVLVGLRADLGVAYWAGLAVAALLVAYEFRIARHRERGPCFRAFLHNNWVGLAIFVGIAVAVAGR.

A run of 8 helical transmembrane segments spans residues 34 to 54 (IGSLLLLWPTWWALWLAADGL), 57 to 77 (LWTLLVFTAGVWLTRSAGCVI), 108 to 128 (LWVFVVLMLVAFALVLTLNWL), 152 to 172 (LPQVYLGMAFGWGIPMAFAAV), 176 to 196 (VPLLGWLLYAANILWATAYDT), 221 to 241 (FDLIAQGILYALMAATLVLVG), 245 to 265 (DLGVAYWAGLAVAALLVAYEF), and 279 to 299 (AFLHNNWVGLAIFVGIAVAVA).

The protein belongs to the UbiA prenyltransferase family. Mg(2+) is required as a cofactor.

Its subcellular location is the cell inner membrane. The enzyme catalyses all-trans-octaprenyl diphosphate + 4-hydroxybenzoate = 4-hydroxy-3-(all-trans-octaprenyl)benzoate + diphosphate. It functions in the pathway cofactor biosynthesis; ubiquinone biosynthesis. Functionally, catalyzes the prenylation of para-hydroxybenzoate (PHB) with an all-trans polyprenyl group. Mediates the second step in the final reaction sequence of ubiquinone-8 (UQ-8) biosynthesis, which is the condensation of the polyisoprenoid side chain with PHB, generating the first membrane-bound Q intermediate 3-octaprenyl-4-hydroxybenzoate. This is 4-hydroxybenzoate octaprenyltransferase from Xanthomonas euvesicatoria pv. vesicatoria (strain 85-10) (Xanthomonas campestris pv. vesicatoria).